The primary structure comprises 461 residues: Eukaryotic translation initiation factor 3 subunit M (461 aa).

The segment at 42 to 61 is disordered; sequence LLEPLRQQEQSDAEPDRKQR. The PCI domain maps to 205–376; that stretch reads DQELAQTHVV…SEFLVHRATY (172 aa). Residues 422 to 461 form a disordered region; sequence AAEEAAQGKSGDKKGDRRQRRDQPQQSQPAPEAATAVAAE. Positions 431-444 are enriched in basic and acidic residues; that stretch reads SGDKKGDRRQRRDQ. A compositionally biased stretch (low complexity) spans 445–461; the sequence is PQQSQPAPEAATAVAAE.

Belongs to the eIF-3 subunit M family. As to quaternary structure, component of the eukaryotic translation initiation factor 3 (eIF-3) complex.

It is found in the cytoplasm. In terms of biological role, component of the eukaryotic translation initiation factor 3 (eIF-3) complex, which is involved in protein synthesis of a specialized repertoire of mRNAs and, together with other initiation factors, stimulates binding of mRNA and methionyl-tRNAi to the 40S ribosome. The eIF-3 complex specifically targets and initiates translation of a subset of mRNAs involved in cell proliferation. The chain is Eukaryotic translation initiation factor 3 subunit M from Aspergillus terreus (strain NIH 2624 / FGSC A1156).